The chain runs to 501 residues: Lysine--tRNA ligase (501 aa).

Mg(2+) is bound by residues E404 and E411.

This sequence belongs to the class-II aminoacyl-tRNA synthetase family. As to quaternary structure, homodimer. Mg(2+) serves as cofactor.

Its subcellular location is the cytoplasm. The catalysed reaction is tRNA(Lys) + L-lysine + ATP = L-lysyl-tRNA(Lys) + AMP + diphosphate. The protein is Lysine--tRNA ligase of Campylobacter jejuni subsp. doylei (strain ATCC BAA-1458 / RM4099 / 269.97).